The sequence spans 354 residues: Alanine racemase (354 aa).

The active-site Proton acceptor; specific for D-alanine is K33. K33 is subject to N6-(pyridoxal phosphate)lysine. R127 contacts substrate. Y251 (proton acceptor; specific for L-alanine) is an active-site residue. M299 provides a ligand contact to substrate.

This sequence belongs to the alanine racemase family. Requires pyridoxal 5'-phosphate as cofactor.

It catalyses the reaction L-alanine = D-alanine. It participates in amino-acid biosynthesis; D-alanine biosynthesis; D-alanine from L-alanine: step 1/1. Its function is as follows. Catalyzes the interconversion of L-alanine and D-alanine. May also act on other amino acids. This chain is Alanine racemase (alr), found in Fusobacterium nucleatum subsp. nucleatum (strain ATCC 25586 / DSM 15643 / BCRC 10681 / CIP 101130 / JCM 8532 / KCTC 2640 / LMG 13131 / VPI 4355).